Reading from the N-terminus, the 80-residue chain is Clavanin-D (80 aa).

An N-terminal signal peptide occupies residues 1 to 19 (MKTTILILLILGLGINAKS). Positions 20–29 (LEERKSEEEK) are excised as a propeptide. Phenylalanine amide is present on phenylalanine 52. Residues 54–80 (DDQQDNGKFYGHYAEDNGKHWYDTGDQ) constitute a propeptide that is removed on maturation.

Hemocytes and pharyngeal tissues.

It localises to the secreted. Its function is as follows. Has antimicrobial activity against E.coli, L.monocytogenes and C.albicans. This is Clavanin-D from Styela clava (Sea squirt).